The primary structure comprises 253 residues: MILDAKNLAMPPRLLPVSFTIDAGEIVHFIGPNGSGKSTAISMLSGLFEGQGEITFMGQLLSDYDLPSLARMRCYLSQQDRPAFSVAVYHYLALSLSALNNPRVDHVQHALDEICQALNITDKLNRNIQTLSGGEWQRVRLAAACLQVWPAINPEATLLILDEPAAALDIGQEAAMYKLIRRMAEQGIAVVMANHDLNRTLREADKVLLLNNGSCVVKGSPSDVMTVEQLESTFATQVQRIEHEGRSCLIFND.

The 235-residue stretch at 3-237 (LDAKNLAMPP…EQLESTFATQ (235 aa)) folds into the ABC transporter domain. 31–38 (GPNGSGKS) contributes to the ATP binding site.

This sequence belongs to the ABC transporter superfamily. Vitamin B12 importer (TC 3.A.1.13.1) family. The complex is composed of two ATP-binding proteins (BtuD), two transmembrane proteins (BtuC) and a solute-binding protein (BtuF).

Its subcellular location is the cell inner membrane. The catalysed reaction is an R-cob(III)alamin(out) + ATP + H2O = an R-cob(III)alamin(in) + ADP + phosphate + H(+). Its function is as follows. Part of the ABC transporter complex BtuCDF involved in vitamin B12 import. Responsible for energy coupling to the transport system. The protein is Vitamin B12 import ATP-binding protein BtuD of Photobacterium profundum (strain SS9).